Consider the following 411-residue polypeptide: MKNKYYPLRSSMDELSTKNDNEIDLEKGPLPEYNSEDGSTLPPYSENLNLKDPKQMGANNPNLFNTDESTTPPDYGEDSLSTTHRENHSSGTADNSCASTLKKAILSFIPIFVLNVSAVCYLTYKDALFKDYGKDEWVYFGMWCASCLMILISLWCFYETWIKAVKVTAVFLAQCIKVTAVFLPQCIKVTAVFLAKCVKVTAVFLAKCIKVTAVFLAQCVKVTAISLAKCVKVISIGLFNIRREMMIIIWILWLIICCILFGCVKDGRLNFNKALICSTCTISAVLFLIVSSVCIPIWTLWRALSGMLQVLGIHGIIAVLVNGSMSLFGKHFGWRGYEIEGFVLFFTSSALFLYEMERPGVLKRMRNTTGNVIGYICGVIGDAFRRIENAFRGANDNNNIPLGEMDVEGEV.

The segment at 1 to 95 (MKNKYYPLRS…ENHSSGTADN (95 aa)) is disordered. The segment covering 11 to 29 (SMDELSTKNDNEIDLEKGP) has biased composition (basic and acidic residues). The span at 57–72 (GANNPNLFNTDESTTP) shows a compositional bias: polar residues. 6 helical membrane passes run 104–124 (AILS…YLTY), 137–157 (WVYF…LWCF), 244–264 (EMMI…FGCV), 281–301 (TISA…WTLW), 303–323 (ALSG…LVNG), and 336–356 (GYEI…LYEM).

This sequence belongs to the WTF family. Homomer. Forms protein aggregates. The two isoforms can interact with each other and with themselves. High sequence similarity is required for their interaction.

The protein localises to the spore membrane. It is found in the vacuole membrane. It localises to the ascus epiplasm. Its subcellular location is the cytoplasm. The protein resides in the endoplasmic reticulum membrane. Functionally, promotes unequal transmission of alleles from the parental zygote to progeny spores by acting as poison/antidote system where the poison and antidote proteins are produced from the same locus; the poison component is trans-acting and targets all spores within an ascus whereas the antidote component is spore-specific, leading to poisoning of all progeny that do not inherit the allele. Its function is as follows. Localizes isoform 2 to the vacuole thereby facilitating its degradation. In terms of biological role, forms toxic aggregates that disrupt spore maturation. This Schizosaccharomyces kambucha (Fission yeast) protein is Meiotic driver wtf33.